Here is a 290-residue protein sequence, read N- to C-terminus: Enoyl-CoA hydratase, mitochondrial (290 aa).

Residues 1–27 constitute a mitochondrion transit peptide; that stretch reads MAALRVLLSCVRGPLRPPVRCPAWRPF. A Phosphothreonine modification is found at Thr46. Residue 98-101 coordinates substrate; sequence ADIK. Lys101 is modified (N6-acetyllysine; alternate). Lys101 is subject to N6-succinyllysine; alternate. Residue Ser114 is modified to Phosphoserine. Lys115 carries the N6-acetyllysine; alternate modification. Lys115 carries the N6-succinyllysine; alternate modification. Lys118 carries the post-translational modification N6-acetyllysine. Substrate is bound at residue Gly141. Position 204 is an N6-succinyllysine (Lys204). N6-acetyllysine is present on Lys211.

It belongs to the enoyl-CoA hydratase/isomerase family. In terms of assembly, homohexamer; dimer of trimers. In terms of tissue distribution, liver, fibroblast, muscle. Barely detectable in spleen and kidney.

It is found in the mitochondrion matrix. It carries out the reaction a (3S)-3-hydroxyacyl-CoA = a (2E)-enoyl-CoA + H2O. The enzyme catalyses a (3E)-enoyl-CoA = a 4-saturated (2E)-enoyl-CoA. It catalyses the reaction (3E)-hexenoyl-CoA = (2E)-hexenoyl-CoA. The catalysed reaction is (3S)-3-hydroxybutanoyl-CoA = (2E)-butenoyl-CoA + H2O. It carries out the reaction 3-hydroxyisovaleryl-CoA = 3-methylbut-2-enoyl-CoA + H2O. The enzyme catalyses 3-hydroxypropanoyl-CoA = acryloyl-CoA + H2O. It catalyses the reaction 3-hydroxybutanoyl-CoA = (2E)-butenoyl-CoA + H2O. The catalysed reaction is 2-methylpropenoyl-CoA + H2O = (S)-3-hydroxyisobutanoyl-CoA. It carries out the reaction (3S)-hydroxyhexanoyl-CoA = (2E)-hexenoyl-CoA + H2O. The enzyme catalyses (3S)-hydroxydecanoyl-CoA = (2E)-decenoyl-CoA + H2O. Its pathway is lipid metabolism; fatty acid beta-oxidation. Functionally, converts unsaturated trans-2-enoyl-CoA species ((2E)-enoyl-CoA) to the corresponding (3S)-3hydroxyacyl-CoA species through addition of a water molecule to the double bond. Catalyzes the hydration of medium- and short-chained fatty enoyl-CoA thioesters from 4 carbons long (C4) up to C16. Has high substrate specificity for crotonyl-CoA ((2E)-butenoyl-CoA) and moderate specificity for acryloyl-CoA, 3-methylcrotonyl-CoA (3-methyl-(2E)-butenoyl-CoA) and methacrylyl-CoA ((2E)-2-methylpropenoyl-CoA). Can bind tiglyl-CoA (2-methylcrotonoyl-CoA), but hydrates only a small amount of this substrate. Plays a key role in the beta-oxidation spiral of short- and medium-chain fatty acid oxidation. At a lower rate than the hydratase reaction, catalyzes the isomerase reaction of trans-3-enoyl-CoA species (such as (3E)-hexenoyl-CoA) to trans-2-enoyl-CoA species (such as (2E)-hexenoyl-CoA), which are subsequently hydrated to 3(S)-3-hydroxyacyl-CoA species (such as (3S)-hydroxyhexanoyl-CoA). This Homo sapiens (Human) protein is Enoyl-CoA hydratase, mitochondrial.